The primary structure comprises 565 residues: Phosphomethylpyrimidine synthase (565 aa).

Substrate-binding positions include N201, M230, Y259, H295, 315-317 (SRG), 356-359 (DGLR), and E395. H399 contributes to the Zn(2+) binding site. Residue Y422 participates in substrate binding. Position 463 (H463) interacts with Zn(2+). [4Fe-4S] cluster contacts are provided by C543, C546, and C551.

The protein belongs to the ThiC family. As to quaternary structure, homodimer. [4Fe-4S] cluster serves as cofactor.

It carries out the reaction 5-amino-1-(5-phospho-beta-D-ribosyl)imidazole + S-adenosyl-L-methionine = 4-amino-2-methyl-5-(phosphooxymethyl)pyrimidine + CO + 5'-deoxyadenosine + formate + L-methionine + 3 H(+). The protein operates within cofactor biosynthesis; thiamine diphosphate biosynthesis. Its function is as follows. Catalyzes the synthesis of the hydroxymethylpyrimidine phosphate (HMP-P) moiety of thiamine from aminoimidazole ribotide (AIR) in a radical S-adenosyl-L-methionine (SAM)-dependent reaction. This is Phosphomethylpyrimidine synthase from Ehrlichia canis (strain Jake).